Reading from the N-terminus, the 314-residue chain is 2,3-dihydroxyphenylpropionate/2,3-dihydroxicinnamic acid 1,2-dioxygenase (314 aa).

His-115 acts as the Proton donor in catalysis. The active-site Proton acceptor is His-179.

The protein belongs to the LigB/MhpB extradiol dioxygenase family. In terms of assembly, homotetramer. Fe(2+) is required as a cofactor.

It carries out the reaction 3-(2,3-dihydroxyphenyl)propanoate + O2 = (2Z,4E)-2-hydroxy-6-oxonona-2,4-dienedioate + H(+). It catalyses the reaction (2E)-3-(2,3-dihydroxyphenyl)prop-2-enoate + O2 = (2Z,4E,7E)-2-hydroxy-6-oxonona-2,4,7-trienedioate + H(+). Its pathway is aromatic compound metabolism; 3-phenylpropanoate degradation. Catalyzes the non-heme iron(II)-dependent oxidative cleavage of 2,3-dihydroxyphenylpropionic acid and 2,3-dihydroxicinnamic acid into 2-hydroxy-6-ketononadienedioate and 2-hydroxy-6-ketononatrienedioate, respectively. The protein is 2,3-dihydroxyphenylpropionate/2,3-dihydroxicinnamic acid 1,2-dioxygenase of Escherichia coli O157:H7.